A 647-amino-acid polypeptide reads, in one-letter code: Golgi-associated RAB2B interactor protein 3 (647 aa).

Residues 188–202 (IPTADTSTETKSTLV) show a composition bias toward polar residues. Disordered regions lie at residues 188–220 (IPTADTSTETKSTLVSEIHGEGDRDSKFQTSQD), 267–296 (TAGAAGATGAAGATGAAGSARAAGGAGSAR), 361–384 (SKSPGSGQVATGLTGTASKDQERS), and 465–573 (RDGS…GFVS). A compositionally biased stretch (basic and acidic residues) spans 205 to 214 (IHGEGDRDSK). A compositionally biased stretch (polar residues) spans 361-378 (SKSPGSGQVATGLTGTAS). Residue serine 378 is modified to Phosphoserine. Residues 478-491 (TQKEKRERRESDRK) show a composition bias toward basic and acidic residues. The span at 492-501 (GSRKSSHHQR) shows a compositional bias: basic residues. The short motif at 494 to 511 (RKSSHHQRTGASRHSSSK) is the Bipartite nuclear localization signal element. Residues 528–556 (KTREDKKEKGRGSLRDQRHSSSYRSESRT) show a composition bias toward basic and acidic residues. 2 positions are modified to phosphoserine: serine 634 and serine 636.

It belongs to the GARIN family. Interacts (via N-terminus) with RAB2B (in GTP-bound form). Interacts with FRG1.

It is found in the golgi apparatus. It localises to the nucleus. The protein localises to the cajal body. May be involved in RNA biogenesis. This is Golgi-associated RAB2B interactor protein 3 (Garin3) from Rattus norvegicus (Rat).